The sequence spans 450 residues: Tubulin alpha chain (450 aa).

A GTP-binding site is contributed by Gln11. At Lys40 the chain carries N6-acetyllysine. GTP is bound by residues Glu71, Ser140, Gly144, Thr145, Thr179, Asn206, and Asn228. Glu71 contributes to the Mg(2+) binding site. Glu254 is an active-site residue.

It belongs to the tubulin family. In terms of assembly, dimer of alpha and beta chains. A typical microtubule is a hollow water-filled tube with an outer diameter of 25 nm and an inner diameter of 15 nM. Alpha-beta heterodimers associate head-to-tail to form protofilaments running lengthwise along the microtubule wall with the beta-tubulin subunit facing the microtubule plus end conferring a structural polarity. Microtubules usually have 13 protofilaments but different protofilament numbers can be found in some organisms and specialized cells. It depends on Mg(2+) as a cofactor. Undergoes a tyrosination/detyrosination cycle, the cyclic removal and re-addition of a C-terminal tyrosine residue by the enzymes tubulin tyrosine carboxypeptidase (TTCP) and tubulin tyrosine ligase (TTL), respectively. In terms of processing, acetylation of alpha chains at Lys-40 stabilizes microtubules and affects affinity and processivity of microtubule motors. This modification has a role in multiple cellular functions, ranging from cell motility, cell cycle progression or cell differentiation to intracellular trafficking and signaling.

The protein resides in the cytoplasm. It is found in the cytoskeleton. It carries out the reaction GTP + H2O = GDP + phosphate + H(+). Its function is as follows. Tubulin is the major constituent of microtubules, a cylinder consisting of laterally associated linear protofilaments composed of alpha- and beta-tubulin heterodimers. Microtubules grow by the addition of GTP-tubulin dimers to the microtubule end, where a stabilizing cap forms. Below the cap, tubulin dimers are in GDP-bound state, owing to GTPase activity of alpha-tubulin. In Lepidoglyphus destructor (Storage mite), this protein is Tubulin alpha chain.